Reading from the N-terminus, the 129-residue chain is MTEGKWAIAHIYSSFNNTLITITDLTGAETIAKISGGMVVKAARDESSPYTAMQMAMQVAEQAKAKGIVGVHVKVRAPGGNKQRSPGPGAQAAIRALARAGLRIGRIEDVTPIPHDGTKPKGGKRGRRV.

The disordered stretch occupies residues 108–129 (EDVTPIPHDGTKPKGGKRGRRV).

This sequence belongs to the universal ribosomal protein uS11 family. As to quaternary structure, part of the 30S ribosomal subunit.

Its function is as follows. Located on the platform of the 30S subunit. In Methanothrix thermoacetophila (strain DSM 6194 / JCM 14653 / NBRC 101360 / PT) (Methanosaeta thermophila), this protein is Small ribosomal subunit protein uS11.